A 572-amino-acid chain; its full sequence is Proline--tRNA ligase (572 aa).

This sequence belongs to the class-II aminoacyl-tRNA synthetase family. ProS type 1 subfamily. In terms of assembly, homodimer.

Its subcellular location is the cytoplasm. The catalysed reaction is tRNA(Pro) + L-proline + ATP = L-prolyl-tRNA(Pro) + AMP + diphosphate. Its function is as follows. Catalyzes the attachment of proline to tRNA(Pro) in a two-step reaction: proline is first activated by ATP to form Pro-AMP and then transferred to the acceptor end of tRNA(Pro). As ProRS can inadvertently accommodate and process non-cognate amino acids such as alanine and cysteine, to avoid such errors it has two additional distinct editing activities against alanine. One activity is designated as 'pretransfer' editing and involves the tRNA(Pro)-independent hydrolysis of activated Ala-AMP. The other activity is designated 'posttransfer' editing and involves deacylation of mischarged Ala-tRNA(Pro). The misacylated Cys-tRNA(Pro) is not edited by ProRS. The sequence is that of Proline--tRNA ligase from Yersinia pestis bv. Antiqua (strain Antiqua).